We begin with the raw amino-acid sequence, 355 residues long: Beta-porphyranase C (355 aa).

The first 18 residues, 1 to 18, serve as a signal peptide directing secretion; that stretch reads MIKTLKRIPLVFLIAIMA. The N-palmitoyl cysteine moiety is linked to residue Cys19. Cys19 carries S-diacylglycerol cysteine lipidation. The interval 22 to 72 is disordered; sequence SGDNGKDKVEEQEQAQEQGEKKGQGEERDKEDGIDGLQPTFLADQDPKPDD. The span at 39–54 shows a compositional bias: basic and acidic residues; the sequence is QGEKKGQGEERDKEDG. The 285-residue stretch at 71-355 folds into the GH16 domain; that stretch reads DDKKWIKVEG…WVRVWQLEDL (285 aa). The substrate site is built by Trp110, Glu208, and Glu213. Glu208 functions as the Nucleophile in the catalytic mechanism. The active-site Proton donor is the Glu213.

This sequence belongs to the glycosyl hydrolase 16 family.

It is found in the cell outer membrane. It catalyses the reaction Hydrolysis of beta-D-galactopyranose-(1-&gt;4)-alpha-L-galactopyranose-6-sulfate linkages in porphyran.. In terms of biological role, cleaves the sulfated polysaccharide porphyran at the (1-&gt;4) linkages between beta-D-galactopyranose and alpha-L-galactopyranose-6-sulfate, forming mostly the disaccharide alpha-L-galactopyranose-6-sulfate-(1-&gt;3)-beta-D-galactose. This chain is Beta-porphyranase C (porC), found in Zobellia galactanivorans (strain DSM 12802 / CCUG 47099 / CIP 106680 / NCIMB 13871 / Dsij).